The chain runs to 265 residues: Exosome complex component Rrp4 (265 aa).

Residues 65–137 (GDNVIGKIVD…EVNNIDLTTK (73 aa)) form the S1 motif domain. The KH domain maps to 147–205 (KGGQIVKITPSRVPRVIGRGGSMINMIKKLTMTRIIVGQNGWIWVNGKNEALEKLAIEA). The segment covering 241–254 (EIPELEEEPQEETE) has biased composition (acidic residues). Residues 241 to 265 (EIPELEEEPQEETEVNNNDGETRRT) are disordered.

Belongs to the RRP4 family. In terms of assembly, component of the archaeal exosome complex. Forms a trimer of Rrp4 and/or Csl4 subunits. The trimer associates with a hexameric ring-like arrangement composed of 3 Rrp41-Rrp42 heterodimers.

Its subcellular location is the cytoplasm. Non-catalytic component of the exosome, which is a complex involved in RNA degradation. Increases the RNA binding and the efficiency of RNA degradation. Confers strong poly(A) specificity to the exosome. In Pyrococcus horikoshii (strain ATCC 700860 / DSM 12428 / JCM 9974 / NBRC 100139 / OT-3), this protein is Exosome complex component Rrp4.